Here is a 291-residue protein sequence, read N- to C-terminus: Nitrogenase iron protein 1 (291 aa).

ATP is bound at residue 10-17; that stretch reads GKGGIGKS. Residue Cys98 coordinates [4Fe-4S] cluster. ADP-ribosylarginine; by dinitrogenase reductase ADP-ribosyltransferase is present on Arg101. Cys133 lines the [4Fe-4S] cluster pocket.

Belongs to the NifH/BchL/ChlL family. Homodimer. [4Fe-4S] cluster is required as a cofactor. In terms of processing, the reversible ADP-ribosylation of Arg-101 inactivates the nitrogenase reductase and regulates nitrogenase activity.

It carries out the reaction N2 + 8 reduced [2Fe-2S]-[ferredoxin] + 16 ATP + 16 H2O = H2 + 8 oxidized [2Fe-2S]-[ferredoxin] + 2 NH4(+) + 16 ADP + 16 phosphate + 6 H(+). In terms of biological role, the key enzymatic reactions in nitrogen fixation are catalyzed by the nitrogenase complex, which has 2 components: the iron protein (component 2) and a component 1 which is either a molybdenum-iron protein, a vanadium-iron, or an iron-iron protein. In Azotobacter chroococcum mcd 1, this protein is Nitrogenase iron protein 1 (nifH1).